A 297-amino-acid polypeptide reads, in one-letter code: uncharacterized protein (297 aa).

Positions 1–24 (MRAINKFLITVCIALLASVAVALG) are cleaved as a signal peptide. Heme is bound by residues C58, C61, H62, C141, C144, H145, C167, C170, H171, C223, C226, H227, C264, C267, and H268. A disordered region spans residues 277-297 (TNSVDTWSREGEGAEVQQLPH).

Post-translationally, binds 5 heme groups per subunit.

This is an uncharacterized protein from Archaeoglobus fulgidus (strain ATCC 49558 / DSM 4304 / JCM 9628 / NBRC 100126 / VC-16).